Reading from the N-terminus, the 482-residue chain is Probable polyamine transporter At1g31820 (482 aa).

The next 11 membrane-spanning stretches (helical) occupy residues Val-36–Ala-56, Leu-66–Ile-86, Phe-94–Phe-114, Val-143–Leu-163, Leu-171–Val-191, Val-254–Leu-274, Gly-294–Ala-314, Thr-344–Phe-364, Ile-367–Val-387, Thr-406–Leu-426, and Ile-429–Leu-449.

The protein belongs to the amino acid-polyamine-organocation (APC) superfamily. Polyamine:cation symporter (PHS) (TC 2.A.3.12) family.

It is found in the cell membrane. Probable cell membrane polyamine/proton symporter involved in the polyamine uptake in cells. This is Probable polyamine transporter At1g31820 from Arabidopsis thaliana (Mouse-ear cress).